A 268-amino-acid chain; its full sequence is Inositol monophosphatase 3 (268 aa).

4 residues coordinate Mg(2+): Glu71, Asp91, Leu93, and Asp94. Glu71 provides a ligand contact to substrate. Substrate is bound by residues 93–96 (LDGT), 194–196 (GSC), Glu213, and Asp221. A Mg(2+)-binding site is contributed by Asp221.

The protein belongs to the inositol monophosphatase superfamily. Mg(2+) serves as cofactor. Expressed in the shoot apex, roots, stems, leaves, flowers and young and mature green fruits.

It catalyses the reaction a myo-inositol phosphate + H2O = myo-inositol + phosphate. It participates in polyol metabolism; myo-inositol biosynthesis; myo-inositol from D-glucose 6-phosphate: step 2/2. In terms of biological role, responsible for the provision of inositol required for synthesis of phosphatidylinositol and polyphosphoinositides. In Solanum lycopersicum (Tomato), this protein is Inositol monophosphatase 3 (IMP3).